Here is an 896-residue protein sequence, read N- to C-terminus: Phosphatidate phosphatase LPIN2 (896 aa).

Residues 1-108 (MNYVGQLAGQ…LPAYLATSPI (108 aa)) form an N-LIP region. The residue at position 106 (S106) is a Phosphoserine. Residues 120–208 (TPLVKSGGDE…SSNASLKEEE (89 aa)) form a disordered region. Positions 152 to 162 (VKKKKRRRKKY) are enriched in basic residues. The Nuclear localization signal motif lies at 153–158 (KKKKRR). Phosphoserine is present on residues S174, S186, S187, S243, and S303. Disordered regions lie at residues 370–405 (AEAP…DIYL) and 420–459 (FPKS…TECL). The span at 387–396 (KKKGVHKRSQ) shows a compositional bias: basic residues. Positions 426–448 (EPGSRQWPESDTLSGSQSPQSVG) are enriched in polar residues. S566 is subject to Phosphoserine. A compositionally biased stretch (basic and acidic residues) spans 569-579 (KQLPESKEGKS). Residues 569–636 (KQLPESKEGK…LSHGSTTSYK (68 aa)) form a disordered region. Over residues 604-617 (SSSDEGSQELEESI) the composition is skewed to acidic residues. Positions 635–837 (YKKSLRLSSD…RIFTVNPKGE (203 aa)) are C-LIP. The short motif at 689-693 (DIDGT) is the DXDXT motif element. The short motif at 700 to 704 (LGQIL) is the LXXIL motif element.

Belongs to the lipin family. The cofactor is Mg(2+). In terms of tissue distribution, expressed in liver, lung, kidney, placenta, spleen, thymus, lymph node, prostate, testes, small intestine, and colon.

The protein localises to the nucleus. It is found in the cytoplasm. The protein resides in the cytosol. It localises to the endoplasmic reticulum membrane. The catalysed reaction is a 1,2-diacyl-sn-glycero-3-phosphate + H2O = a 1,2-diacyl-sn-glycerol + phosphate. Its activity is regulated as follows. Inhibited by N-ethylmaleimide. Its function is as follows. Acts as a magnesium-dependent phosphatidate phosphatase enzyme which catalyzes the conversion of phosphatidic acid to diacylglycerol during triglyceride, phosphatidylcholine and phosphatidylethanolamine biosynthesis in the endoplasmic reticulum membrane. Plays important roles in controlling the metabolism of fatty acids at different levels. Also acts as a nuclear transcriptional coactivator for PPARGC1A to modulate lipid metabolism. The protein is Phosphatidate phosphatase LPIN2 of Homo sapiens (Human).